The following is a 327-amino-acid chain: Undecaprenyl-phosphate 4-deoxy-4-formamido-L-arabinose transferase (327 aa).

A run of 2 helical transmembrane segments spans residues 235-255 (LLSL…VLLV) and 270-290 (VFTL…GMGL).

Belongs to the glycosyltransferase 2 family.

The protein localises to the cell inner membrane. It catalyses the reaction UDP-4-deoxy-4-formamido-beta-L-arabinose + di-trans,octa-cis-undecaprenyl phosphate = 4-deoxy-4-formamido-alpha-L-arabinopyranosyl di-trans,octa-cis-undecaprenyl phosphate + UDP. The protein operates within glycolipid biosynthesis; 4-amino-4-deoxy-alpha-L-arabinose undecaprenyl phosphate biosynthesis; 4-amino-4-deoxy-alpha-L-arabinose undecaprenyl phosphate from UDP-4-deoxy-4-formamido-beta-L-arabinose and undecaprenyl phosphate: step 1/2. Its pathway is bacterial outer membrane biogenesis; lipopolysaccharide biosynthesis. Its function is as follows. Catalyzes the transfer of 4-deoxy-4-formamido-L-arabinose from UDP to undecaprenyl phosphate. The modified arabinose is attached to lipid A and is required for resistance to polymyxin and cationic antimicrobial peptides. This chain is Undecaprenyl-phosphate 4-deoxy-4-formamido-L-arabinose transferase, found in Yersinia pseudotuberculosis serotype IB (strain PB1/+).